Here is a 329-residue protein sequence, read N- to C-terminus: Ferredoxin--NADP reductase 2 (329 aa).

Residues T18, E37, Q45, Y50, V90, F124, D285, and S326 each coordinate FAD.

This sequence belongs to the ferredoxin--NADP reductase type 2 family. As to quaternary structure, homodimer. It depends on FAD as a cofactor.

It catalyses the reaction 2 reduced [2Fe-2S]-[ferredoxin] + NADP(+) + H(+) = 2 oxidized [2Fe-2S]-[ferredoxin] + NADPH. The polypeptide is Ferredoxin--NADP reductase 2 (Bacillus cytotoxicus (strain DSM 22905 / CIP 110041 / 391-98 / NVH 391-98)).